We begin with the raw amino-acid sequence, 391 residues long: Nuclear hormone receptor family member nhr-115 (391 aa).

The segment at residues 5–77 is a DNA-binding region (nuclear receptor); sequence LFPCQICGQN…IGMDASKFQY (73 aa). The segment at 8 to 28 adopts an NR C4-type zinc-finger fold; that stretch reads CQICGQNSHGTHFGIVSCRAC. The NR C4-type; atypical zinc-finger motif lies at 41–65; that stretch reads ARKGCLTNFKDKGSCFCKPCRLRKC. The NR LBD domain maps to 130 to 388; it reads YLDHGCETPI…FSHPEMFDDS (259 aa).

It belongs to the nuclear hormone receptor family.

It is found in the nucleus. Functionally, orphan nuclear receptor. In Caenorhabditis elegans, this protein is Nuclear hormone receptor family member nhr-115 (nhr-115).